We begin with the raw amino-acid sequence, 319 residues long: Ficolin-2 (319 aa).

Residues 1–22 form the signal peptide; sequence MVLGSAALFVLSLCVTELTLHA. The Collagen-like domain occupies 45–101; the sequence is GCPGLPGALGPKGEAGAKGDRGESGLPGHPGKAGPTGPKGDRGEKGVRGEKGDTGPS. Positions 53–106 are disordered; sequence LGPKGEAGAKGDRGESGLPGHPGKAGPTGPKGDRGEKGVRGEKGDTGPSQSCAT. Positions 83 to 97 are enriched in basic and acidic residues; that stretch reads KGDRGEKGVRGEKGD. In terms of domain architecture, Fibrinogen C-terminal spans 102–319; that stretch reads QSCATGPRTC…KVSEMKVRLI (218 aa). Disulfide bonds link C104/C132 and C111/C139. Positions 255, 257, and 261 each coordinate Ca(2+). Cysteines 263 and 276 form a disulfide. N-linked (GlcNAc...) asparagine glycosylation occurs at N306.

It belongs to the ficolin lectin family. As to quaternary structure, homotrimer. Interacts with elastin. Interacts with MASP1 and MASP2.

The protein localises to the secreted. Its function is as follows. May function in innate immunity through activation of the lectin complement pathway. Calcium-dependent and GlcNAc-binding lectin. In Rattus norvegicus (Rat), this protein is Ficolin-2 (Fcn2).